A 525-amino-acid chain; its full sequence is Glutamate--cysteine ligase (525 aa).

The protein belongs to the glutamate--cysteine ligase type 1 family. Type 1 subfamily.

The enzyme catalyses L-cysteine + L-glutamate + ATP = gamma-L-glutamyl-L-cysteine + ADP + phosphate + H(+). Its pathway is sulfur metabolism; glutathione biosynthesis; glutathione from L-cysteine and L-glutamate: step 1/2. In Pseudoalteromonas translucida (strain TAC 125), this protein is Glutamate--cysteine ligase.